The sequence spans 131 residues: Profilin-3 (131 aa).

The protein belongs to the profilin family. Occurs in many kinds of cells as a complex with monomeric actin in a 1:1 ratio.

It localises to the cytoplasm. The protein localises to the cytoskeleton. Its function is as follows. Binds to actin and affects the structure of the cytoskeleton. At high concentrations, profilin prevents the polymerization of actin, whereas it enhances it at low concentrations. By binding to PIP2, it inhibits the formation of IP3 and DG. This is Profilin-3 from Hevea brasiliensis (Para rubber tree).